The chain runs to 359 residues: UDP-N-acetylglucosamine--N-acetylmuramyl-(pentapeptide) pyrophosphoryl-undecaprenol N-acetylglucosamine transferase (359 aa).

UDP-N-acetyl-alpha-D-glucosamine is bound by residues 15-17 (TGG), Asn-127, Arg-166, Ser-191, Ile-245, 264-269 (ALTVSE), and Gln-290.

It belongs to the glycosyltransferase 28 family. MurG subfamily.

Its subcellular location is the cell inner membrane. It catalyses the reaction di-trans,octa-cis-undecaprenyl diphospho-N-acetyl-alpha-D-muramoyl-L-alanyl-D-glutamyl-meso-2,6-diaminopimeloyl-D-alanyl-D-alanine + UDP-N-acetyl-alpha-D-glucosamine = di-trans,octa-cis-undecaprenyl diphospho-[N-acetyl-alpha-D-glucosaminyl-(1-&gt;4)]-N-acetyl-alpha-D-muramoyl-L-alanyl-D-glutamyl-meso-2,6-diaminopimeloyl-D-alanyl-D-alanine + UDP + H(+). It participates in cell wall biogenesis; peptidoglycan biosynthesis. Its function is as follows. Cell wall formation. Catalyzes the transfer of a GlcNAc subunit on undecaprenyl-pyrophosphoryl-MurNAc-pentapeptide (lipid intermediate I) to form undecaprenyl-pyrophosphoryl-MurNAc-(pentapeptide)GlcNAc (lipid intermediate II). The protein is UDP-N-acetylglucosamine--N-acetylmuramyl-(pentapeptide) pyrophosphoryl-undecaprenol N-acetylglucosamine transferase of Pseudomonas putida (strain GB-1).